The chain runs to 486 residues: GDP-Man:Man(3)GlcNAc(2)-PP-Dol alpha-1,2-mannosyltransferase (486 aa).

At 1–16 (MAGPMCLCGMMRLLTA) the chain is on the lumenal side. A helical transmembrane segment spans residues 17-37 (LFIPVLITSVGLCLIFVLLFI). Topologically, residues 38–229 (CTRLWVQRKK…SNNPVLSRLK (192 aa)) are cytoplasmic. Residues 230–250 (LIYYYLFALFYGWVGSCSDVI) constitute an intramembrane region (helical). Residues 251-393 (MVNSTWTFSH…IGLHTMWNEH (143 aa)) are Cytoplasmic-facing. The segment at residues 394-414 (FGIGIVECMAAGTIILAHNSG) is an intramembrane region (helical). Residues 415–486 (GPKLDIVVPH…FLASSEPLFK (72 aa)) are Cytoplasmic-facing.

Belongs to the glycosyltransferase group 1 family. Glycosyltransferase 4 subfamily.

It is found in the endoplasmic reticulum membrane. The catalysed reaction is an alpha-D-Man-(1-&gt;3)-[alpha-D-Man-(1-&gt;6)]-beta-D-Man-(1-&gt;4)-beta-D-GlcNAc-(1-&gt;4)-alpha-D-GlcNAc-diphospho-di-trans,poly-cis-dolichol + 2 GDP-alpha-D-mannose = an alpha-D-Man-(1-&gt;2)-alpha-D-Man-(1-&gt;2)-alpha-D-Man-(1-&gt;3)-[alpha-D-Man-(1-&gt;6)]-beta-D-Man-(1-&gt;4)-beta-D-GlcNAc-(1-&gt;4)-alpha-D-GlcNAc-diphospho-di-trans,poly-cis-dolichol + 2 GDP + 2 H(+). The protein operates within protein modification; protein glycosylation. Its function is as follows. GDP-Man:Man(3)GlcNAc(2)-PP-Dol alpha-1,2-mannosyltransferase that operates in the biosynthetic pathway of dolichol-linked oligosaccharides, the glycan precursors employed in protein asparagine (N)-glycosylation. The assembly of dolichol-linked oligosaccharides begins on the cytosolic side of the endoplasmic reticulum membrane and finishes in its lumen. The sequential addition of sugars to dolichol pyrophosphate produces dolichol-linked oligosaccharides containing fourteen sugars, including two GlcNAcs, nine mannoses and three glucoses. Once assembled, the oligosaccharide is transferred from the lipid to nascent proteins by oligosaccharyltransferases. Catalyzes, on the cytoplasmic face of the endoplasmic reticulum, the addition of the fourth and fifth mannose residues to the dolichol-linked oligosaccharide chain, to produce Man(5)GlcNAc(2)-PP-dolichol core oligosaccharide. Man(5)GlcNAc(2)-PP-dolichol is a substrate for ALG3, the following enzyme in the biosynthetic pathway. The chain is GDP-Man:Man(3)GlcNAc(2)-PP-Dol alpha-1,2-mannosyltransferase (alg11) from Xenopus laevis (African clawed frog).